We begin with the raw amino-acid sequence, 140 residues long: MAVIYKTTAHASAGREGVVQTVDGFTVSLAFPKPGATHQDKNNPEQLFASAYAGCFSQAVRVVLQQHQLQLATQPIVGVSVELHDQDGLFHIKAGVELAITGVDQTTAQTVITAAHAMCPFSRLIKPENFLGLTLNGAKL.

It belongs to the OsmC/Ohr family.

In Mycoplasma pneumoniae (strain ATCC 29342 / M129 / Subtype 1) (Mycoplasmoides pneumoniae), this protein is Organic hydroperoxide resistance protein-like.